The sequence spans 262 residues: MNRIDKKFEVLKGEGRKALITFITAGDPDIETTYDIVLAIEEVGADIIELGIPYSDPLADGPTIQASSQRALNKGVKIPDIMRIVEKIRFKSDIPLVYLVYYNSIFKYGIQKFLKESKDVGIDGLIIPDLPLEERKDILEEADKYGIYLIPLVAPTSKERIKLITENGKGFVYCVSITGVTGAREDIETDIEEYMKTVSQYTNMPKAIGFGISTPEMAKKLKDFSDGIIVGSALVERIAKGYNKSEMLQEVKSFVSILKEVL.

Residues Glu49 and Asp60 each act as proton acceptor in the active site.

The protein belongs to the TrpA family. As to quaternary structure, tetramer of two alpha and two beta chains.

The catalysed reaction is (1S,2R)-1-C-(indol-3-yl)glycerol 3-phosphate + L-serine = D-glyceraldehyde 3-phosphate + L-tryptophan + H2O. Its pathway is amino-acid biosynthesis; L-tryptophan biosynthesis; L-tryptophan from chorismate: step 5/5. In terms of biological role, the alpha subunit is responsible for the aldol cleavage of indoleglycerol phosphate to indole and glyceraldehyde 3-phosphate. The chain is Tryptophan synthase alpha chain from Thermoanaerobacter pseudethanolicus (strain ATCC 33223 / 39E) (Clostridium thermohydrosulfuricum).